Here is a 343-residue protein sequence, read N- to C-terminus: RNA-binding protein 43 (343 aa).

The region spanning 15 to 90 (RTVVVSGLPV…PLLTVSHFSE (76 aa)) is the RRM domain. The segment at 170–200 (RRNWTGQNPRRVLQKNENSAPTLGTSVPEPA) is disordered. The span at 184-194 (KNENSAPTLGT) shows a compositional bias: polar residues.

This Rattus norvegicus (Rat) protein is RNA-binding protein 43 (Rbm43).